A 329-amino-acid polypeptide reads, in one-letter code: Tetraacyldisaccharide 4'-kinase (329 aa).

57–64 (TAGGSGKT) lines the ATP pocket.

This sequence belongs to the LpxK family.

The enzyme catalyses a lipid A disaccharide + ATP = a lipid IVA + ADP + H(+). The protein operates within glycolipid biosynthesis; lipid IV(A) biosynthesis; lipid IV(A) from (3R)-3-hydroxytetradecanoyl-[acyl-carrier-protein] and UDP-N-acetyl-alpha-D-glucosamine: step 6/6. In terms of biological role, transfers the gamma-phosphate of ATP to the 4'-position of a tetraacyldisaccharide 1-phosphate intermediate (termed DS-1-P) to form tetraacyldisaccharide 1,4'-bis-phosphate (lipid IVA). The protein is Tetraacyldisaccharide 4'-kinase of Thiobacillus denitrificans (strain ATCC 25259 / T1).